Reading from the N-terminus, the 239-residue chain is Orotidine 5'-phosphate decarboxylase (239 aa).

Residues aspartate 11, lysine 33, 60–69 (DLKCHDIPTT), threonine 123, arginine 185, glutamine 194, glycine 214, and arginine 215 contribute to the substrate site. Catalysis depends on lysine 62, which acts as the Proton donor.

Belongs to the OMP decarboxylase family. Type 1 subfamily. Homodimer.

It carries out the reaction orotidine 5'-phosphate + H(+) = UMP + CO2. Its pathway is pyrimidine metabolism; UMP biosynthesis via de novo pathway; UMP from orotate: step 2/2. Catalyzes the decarboxylation of orotidine 5'-monophosphate (OMP) to uridine 5'-monophosphate (UMP). This is Orotidine 5'-phosphate decarboxylase from Bacillus licheniformis (strain ATCC 14580 / DSM 13 / JCM 2505 / CCUG 7422 / NBRC 12200 / NCIMB 9375 / NCTC 10341 / NRRL NRS-1264 / Gibson 46).